The primary structure comprises 352 residues: GPLRVRTSKMALPAALLRAAALRCRLPLASVGRRHLAAEAFVRDRPHVNVGTIGHVDHGKTTLTAAITKVLSESGGARFQRYEDIDKAPEERARGITINAAHVEYSTARRHYAHTDCPGHADYVKNMITGTAPLDGCILVVAATDGQMPQTREHLLLARQVGVRHVVVYVNKADAVSDAELLPLVELELRELLAEMGYDAERTPVVVGSALCALQDRDPTLGRDSVLQLLEAIDTHIPLPHRDVQRPFLLPIEGVHSIPGRGTVVTGTVERGAVSKGDECELRGYGRVLKAVVTGLETFHKSLPRAEAGDNVGALLRGLRREDVRRGMVMGQPGALRDHRKLQAQVYVLSAQ.

In terms of domain architecture, tr-type G spans 45–241 (RPHVNVGTIG…AIDTHIPLPH (197 aa)). The interval 54–61 (GHVDHGKT) is G1. GTP is bound by residues aspartate 57, glycine 59, lysine 60, threonine 61, and threonine 62. Residue threonine 61 participates in Mg(2+) binding. A G2 region spans residues 95-99 (GITIN). The tract at residues 116–119 (DCPG) is G3. Positions 171, 174, 209, 210, and 211 each coordinate GTP. Residues 171–174 (NKAD) form a G4 region. The G5 stretch occupies residues 209–211 (SAL).

It is found in the mitochondrion. The catalysed reaction is GTP + H2O = GDP + phosphate + H(+). GTP hydrolase that promotes the GTP-dependent binding of aminoacyl-tRNA to the A-site of ribosomes during protein biosynthesis. This Gallus gallus (Chicken) protein is Elongation factor Tu, mitochondrial.